The primary structure comprises 77 residues: Large ribosomal subunit protein bL28 (77 aa).

Belongs to the bacterial ribosomal protein bL28 family.

This chain is Large ribosomal subunit protein bL28, found in Polaromonas sp. (strain JS666 / ATCC BAA-500).